A 411-amino-acid polypeptide reads, in one-letter code: S-adenosylmethionine synthase (411 aa).

An ATP-binding site is contributed by His-15. Asp-17 lines the Mg(2+) pocket. Glu-43 serves as a coordination point for K(+). L-methionine-binding residues include Glu-56 and Gln-100. The interval 100 to 110 is flexible loop; that stretch reads QSPDIAQGVNE. ATP-binding positions include 171–173, 248–249, Asp-257, 263–264, Ala-280, and Lys-284; these read DGK, KF, and RK. Residue Asp-257 coordinates L-methionine. L-methionine is bound at residue Lys-288.

The protein belongs to the AdoMet synthase family. In terms of assembly, homotetramer; dimer of dimers. Mg(2+) serves as cofactor. Requires K(+) as cofactor.

Its subcellular location is the cytoplasm. It catalyses the reaction L-methionine + ATP + H2O = S-adenosyl-L-methionine + phosphate + diphosphate. It participates in amino-acid biosynthesis; S-adenosyl-L-methionine biosynthesis; S-adenosyl-L-methionine from L-methionine: step 1/1. Catalyzes the formation of S-adenosylmethionine (AdoMet) from methionine and ATP. The overall synthetic reaction is composed of two sequential steps, AdoMet formation and the subsequent tripolyphosphate hydrolysis which occurs prior to release of AdoMet from the enzyme. The protein is S-adenosylmethionine synthase of Synechococcus sp. (strain CC9605).